The chain runs to 115 residues: Large ribosomal subunit protein uL22 (115 aa).

The protein belongs to the universal ribosomal protein uL22 family. As to quaternary structure, part of the 50S ribosomal subunit.

Its function is as follows. This protein binds specifically to 23S rRNA; its binding is stimulated by other ribosomal proteins, e.g. L4, L17, and L20. It is important during the early stages of 50S assembly. It makes multiple contacts with different domains of the 23S rRNA in the assembled 50S subunit and ribosome. Functionally, the globular domain of the protein is located near the polypeptide exit tunnel on the outside of the subunit, while an extended beta-hairpin is found that lines the wall of the exit tunnel in the center of the 70S ribosome. The chain is Large ribosomal subunit protein uL22 (rplV) from Wolbachia pipientis wMel.